Consider the following 114-residue polypeptide: Gas vesicle protein J1 (114 aa).

Positions 13–22 (LAEMLEMLLD) are alpha helix 1. Beta-strand regions lie at residues 25 to 35 (VVVNADIAVSV) and 40 to 50 (LLGIELRAAIA). Positions 46 to 50 (RAAIA) match the Conserved in GvpM1/2 but not GvpA motif. Alpha helix regions lie at residues 52-72 (FETAAEYGLEFPTGTDMERVE), 78-87 (SPDQSDPASE), and 95-105 (TNPLSDDSTPT). The tract at residues 63–114 (PTGTDMERVESAANISPDQSDPASETQSETESTNPLSDDSTPTASTSAEETK) is disordered. Residues 75 to 98 (ANISPDQSDPASETQSETESTNPL) show a composition bias toward polar residues. Over residues 99-114 (SDDSTPTASTSAEETK) the composition is skewed to low complexity.

This sequence belongs to the gas vesicle GvpA family. GvpF to GvpM interact with each other in vitro, and may form multi-subunit complex(es). Interacts with GvpA1.

Its subcellular location is the gas vesicle. Functionally, proteins GvpF to GvpM might be involved in nucleating gas vesicle formation. Mutagenesis of residues 13-61 shows that almost none of them can be substituted and still make gas vesicles. A minor component of the gas vesicle. Gas vesicles are hollow, gas filled proteinaceous nanostructures found in several microbial planktonic microorganisms. They allow positioning of halobacteria at the optimal depth for growth in the poorly aerated, shallow brine pools of their habitat. Expression of a 9.5 kb p-vac DNA fragment containing 2 divergently transcribed regions (gvpD-gvpE-gvpF-gvpG-gvpH-gvpI-gvpJ-gvpK-gvpL-gvpM and gvpA-gvpC-gvpN-gvpO) allows H.volcanii to produce gas vesicles. All site-directed mutagenesis is tested in H.volcanii. A minimal gas vesicle can be made in H.volcanii by gvpA1-gvpO1 plus gvpF1-gvpG1-gvpJ1-gvpK1-gvpL1-gvpM1; lack of enough GvpJ1 prevents formation. A similar region restores gas vesicle production in H.halobium without the p-vac locus, but it still has the c-vac locus. The chain is Gas vesicle protein J1 (gvpJ11) from Halobacterium salinarum (strain ATCC 700922 / JCM 11081 / NRC-1) (Halobacterium halobium).